The chain runs to 155 residues: 17.6 kDa class II heat shock protein (155 aa).

The 118-residue stretch at Asp38–Ala155 folds into the sHSP domain.

It belongs to the small heat shock protein (HSP20) family. In terms of assembly, may form oligomeric structures.

The protein localises to the cytoplasm. This is 17.6 kDa class II heat shock protein (HSP17.6) from Arabidopsis thaliana (Mouse-ear cress).